A 504-amino-acid polypeptide reads, in one-letter code: Probable protein phosphatase 2C 18 (504 aa).

A disordered region spans residues 1 to 49; that stretch reads MGLCYSVDRTTGKEPGEASSTATTAETVEERSGSGRWRRPRDLKGGGDI. Low complexity predominate over residues 17 to 26; that stretch reads EASSTATTAE. In terms of domain architecture, PPM-type phosphatase spans 67-399; that stretch reads IACLYTQQGK…DDCTVVCLFL (333 aa). Positions 103, 104, 344, and 390 each coordinate Mn(2+). Residues 410 to 435 are disordered; it reads TNVKKDSPKEESIESVTNSTSKEEDE. Positions 412–421 are enriched in basic and acidic residues; the sequence is VKKDSPKEES.

It belongs to the PP2C family. It depends on Mg(2+) as a cofactor. The cofactor is Mn(2+).

It carries out the reaction O-phospho-L-seryl-[protein] + H2O = L-seryl-[protein] + phosphate. It catalyses the reaction O-phospho-L-threonyl-[protein] + H2O = L-threonyl-[protein] + phosphate. The polypeptide is Probable protein phosphatase 2C 18 (Arabidopsis thaliana (Mouse-ear cress)).